The following is a 64-amino-acid chain: MASKKGVRLIITVECTECRSNPDKRTPGVSRYTTSKNRRNTTGRLEIKKYCPHCNKHTVHKEIK.

Belongs to the bacterial ribosomal protein bL33 family.

In Microcystis aeruginosa (strain NIES-843 / IAM M-2473), this protein is Large ribosomal subunit protein bL33.